A 156-amino-acid polypeptide reads, in one-letter code: Transcriptional regulator MraZ (156 aa).

2 consecutive SpoVT-AbrB domains span residues 7–54 and 84–127; these read NIEV…PESV and VEVV…AKER.

The protein belongs to the MraZ family. In terms of assembly, forms oligomers.

It is found in the cytoplasm. Its subcellular location is the nucleoid. The sequence is that of Transcriptional regulator MraZ from Bacteroides thetaiotaomicron (strain ATCC 29148 / DSM 2079 / JCM 5827 / CCUG 10774 / NCTC 10582 / VPI-5482 / E50).